The chain runs to 404 residues: Deoxyguanosinetriphosphate triphosphohydrolase-like protein (404 aa).

Positions 69–217 (RLTHSLEVAQ…AGIADDIAYD (149 aa)) constitute an HD domain.

Belongs to the dGTPase family. Type 2 subfamily.

This chain is Deoxyguanosinetriphosphate triphosphohydrolase-like protein, found in Rhodopseudomonas palustris (strain BisB18).